The chain runs to 121 residues: Protein yippee-like At3g55890 (121 aa).

Positions Asn-12–His-109 constitute a Yippee domain. Positions 16, 19, 72, and 75 each coordinate Zn(2+).

This sequence belongs to the yippee family.

This chain is Protein yippee-like At3g55890, found in Arabidopsis thaliana (Mouse-ear cress).